A 102-amino-acid polypeptide reads, in one-letter code: Protein GOLVEN 4 (102 aa).

Positions 1-27 are cleaved as a signal peptide; sequence MEMKKWSYANLITLALLFLFFIILLLA. Positions 28–89 are excised as a propeptide; that stretch reads FQGGSRDDDH…QEREVYVELR (62 aa). A disordered region spans residues 56 to 78; the sequence is KSLKPINPTKKNGFEYPDQGSHD. Residue tyrosine 91 is modified to Sulfotyrosine. The residue at position 99 (proline 99) is a Hydroxyproline.

It belongs to the RGF family. As to quaternary structure, binds to LRR receptor-like serine/threonine-protein kinases to trigger their dimerization with SERK proteins and subsequent signaling. Expressed in roots and sepals.

The protein resides in the secreted. In terms of biological role, signaling peptide (root growth factor) that promotes root hairs formation and growth. Maintains the postembryonic root stem cell niche. Regulates the pattern of root growth and lateral root development by modulating the length and the number of cortical cells in the root apical meristem (RAM), and the anticlinal asymmetric cell divisions in lateral root initiation cells. The sequence is that of Protein GOLVEN 4 from Arabidopsis thaliana (Mouse-ear cress).